We begin with the raw amino-acid sequence, 307 residues long: UDP-3-O-acyl-N-acetylglucosamine deacetylase (307 aa).

3 residues coordinate Zn(2+): His80, His239, and Asp243. His266 functions as the Proton donor in the catalytic mechanism.

It belongs to the LpxC family. The cofactor is Zn(2+).

The enzyme catalyses a UDP-3-O-[(3R)-3-hydroxyacyl]-N-acetyl-alpha-D-glucosamine + H2O = a UDP-3-O-[(3R)-3-hydroxyacyl]-alpha-D-glucosamine + acetate. It functions in the pathway glycolipid biosynthesis; lipid IV(A) biosynthesis; lipid IV(A) from (3R)-3-hydroxytetradecanoyl-[acyl-carrier-protein] and UDP-N-acetyl-alpha-D-glucosamine: step 2/6. Catalyzes the hydrolysis of UDP-3-O-myristoyl-N-acetylglucosamine to form UDP-3-O-myristoylglucosamine and acetate, the committed step in lipid A biosynthesis. The protein is UDP-3-O-acyl-N-acetylglucosamine deacetylase of Neisseria meningitidis serogroup A / serotype 4A (strain DSM 15465 / Z2491).